Reading from the N-terminus, the 624-residue chain is Probable potassium transport system protein Kup 1 (624 aa).

The next 12 helical transmembrane spans lie at 10–30 (LALGALGVVFGDIGTSPLYAL), 48–68 (LSLIFWSLIIIVSFKYLMIIF), 94–114 (PLFYIVAIFGAGLLLGDGMLT), 133–153 (LYPYVLPIASVILVLLFSLQA), 159–179 (IGYLFGPLILIWFITIAILGI), 210–230 (FLLGGIFLVVTGGEALFADIG), 242–262 (FFIALPCLLLNYFGQGANLIV), 270–290 (PFFMIAPPWFYLPLIIIATVA), 331–351 (IYVPQINFILFIGTMAFCLAF), 363–383 (IAVNLEMLLVDAMVAYAAVSI), 388–408 (TFNVIFLFGLFLLIDLAFLGA), and 413–433 (FITGGWVPIVLAFFIAFIMYS).

The protein belongs to the HAK/KUP transporter (TC 2.A.72) family.

Its subcellular location is the cell inner membrane. The catalysed reaction is K(+)(in) + H(+)(in) = K(+)(out) + H(+)(out). Its function is as follows. Transport of potassium into the cell. Likely operates as a K(+):H(+) symporter. The polypeptide is Probable potassium transport system protein Kup 1 (Legionella pneumophila subsp. pneumophila (strain Philadelphia 1 / ATCC 33152 / DSM 7513)).